The chain runs to 629 residues: Phosphoglucomutase, chloroplastic (629 aa).

The transit peptide at 1 to 69 (MSSTYARFDT…SSSSGPIIAG (69 aa)) directs the protein to the chloroplast. Residues Arg94 and Ser187 each contribute to the alpha-D-glucose 1,6-bisphosphate site. The active-site Phosphoserine intermediate is the Ser187. Mg(2+) contacts are provided by Ser187, Asp352, Asp354, and Asp356. Phosphoserine is present on Ser187. The alpha-D-glucose 1,6-bisphosphate site is built by Asp356, Arg357, Thr420, Glu439, Ser441, and Lys452.

Belongs to the phosphohexose mutase family. As to quaternary structure, monomer. It depends on Mg(2+) as a cofactor.

The protein resides in the plastid. It localises to the chloroplast. The enzyme catalyses alpha-D-glucose 1-phosphate = alpha-D-glucose 6-phosphate. It carries out the reaction O-phospho-L-seryl-[protein] + alpha-D-glucose 1-phosphate = alpha-D-glucose 1,6-bisphosphate + L-seryl-[protein]. The catalysed reaction is alpha-D-glucose 1,6-bisphosphate + L-seryl-[protein] = O-phospho-L-seryl-[protein] + alpha-D-glucose 6-phosphate. With respect to regulation, inhibited by the Calvin cycle intermediates fructose-1,6-bisphosphate and ribulose-1,5-bisphosphate. Catalyzes the reversible isomerization of alpha-D-glucose 1-phosphate to alpha-D-glucose 6-phosphate. The mechanism proceeds via the intermediate compound alpha-D-glucose 1,6-bisphosphate. This enzyme participates in both the breakdown and synthesis of glucose. The polypeptide is Phosphoglucomutase, chloroplastic (PGMP) (Brassica napus (Rape)).